A 280-amino-acid chain; its full sequence is Glycoprotein G (280 aa).

The signal sequence occupies residues 1–24; that stretch reads MGHSGENVLCVALLAIYLAAGGAA. 2 N-linked (GlcNAc...) asparagine; by host glycosylation sites follow: Asn-85 and Asn-111. Positions 191 to 218 are disordered; it reads ESSEERVVATDSDSGSCEDDEKEEKSDC.

This sequence belongs to the alphaherpesvirinae glycoprotein G family.

This is Glycoprotein G (gG) from Psittacid herpesvirus 1 (isolate Amazon parrot/-/97-0001/1997) (PsHV-1).